Here is a 269-residue protein sequence, read N- to C-terminus: Small ribosomal subunit protein uS2 (269 aa).

The interval 228–269 (QLDSDDDYEEFDESLAEGDYDDYDEEEDEDSETVSSQEGEEE) is disordered. The segment covering 230 to 269 (DSDDDYEEFDESLAEGDYDDYDEEEDEDSETVSSQEGEEE) has biased composition (acidic residues).

The protein belongs to the universal ribosomal protein uS2 family.

This chain is Small ribosomal subunit protein uS2, found in Crocosphaera subtropica (strain ATCC 51142 / BH68) (Cyanothece sp. (strain ATCC 51142)).